We begin with the raw amino-acid sequence, 412 residues long: MSELHSLLTFPVRPISEEHYLGELSRFLKAGIPATYTLEQVAAFERSELREDADEVSDEEEQSNTTPLHILARSLPGNLSDDEEQVVLHMMDMLFEYGAGWNFIDFENKTVGDLILERNGGNRESPLYQRVVEAGVSAELLLRKLNGGDVEFIDENEIDICAEASAEVVPKDALDDSTGKVSSVSDDDATAADPDTYLNTKLKYTEDALITENNKDGVMMDWETDIMKLAADTLVSRKPVGESVVLNIGFGMGIIDTFIQERNPKKHYICEAHPDVLKKMKNDGWYQKPNVVILEGKWQDSLNKLLDEGNVFFDGIYYDTFSEHYEDMLDLYDIVVGLVNPEGVFSFFNGLGADRPLCYDVYKKIVEVDVATYGMNCEYTYVDLKGKLPDWKDVKRSYYNCEYYYHPKISFA.

The RMT2 domain occupies 190 to 412 (TAADPDTYLN…YYYHPKISFA (223 aa)). Residues tyrosine 197, methionine 227, 250–255 (FGMGII), 271–273 (EAH), 298–299 (WQ), and aspartate 319 each bind S-adenosyl-L-methionine.

This sequence belongs to the class I-like SAM-binding methyltransferase superfamily. RMT2 methyltransferase family. In terms of assembly, monomer.

The protein localises to the cytoplasm. The protein resides in the nucleus. Functionally, S-adenosyl-L-methionine-dependent protein-arginine N-methyltransferase that methylates the delta-nitrogen atom of arginine residues to form N5-methylarginine (type IV) in target proteins. Monomethylates ribosomal protein L12. The protein is Protein arginine N-methyltransferase 2 of Candida glabrata (strain ATCC 2001 / BCRC 20586 / JCM 3761 / NBRC 0622 / NRRL Y-65 / CBS 138) (Yeast).